A 309-amino-acid chain; its full sequence is Olfactory receptor 7A17 (309 aa).

Topologically, residues 1–25 are extracellular; the sequence is MEPENDTGISEFVLLGLSEEPELQP. A glycan (N-linked (GlcNAc...) asparagine) is linked at asparagine 5. The chain crosses the membrane as a helical span at residues 26–46; that stretch reads FLFGLFLSMYLVTVLGNLLII. Topologically, residues 47–54 are cytoplasmic; sequence LATISDSH. The chain crosses the membrane as a helical span at residues 55-75; the sequence is LHTPMYFFLSNLSFADICFIS. Over 76–99 the chain is Extracellular; it reads TTIPKMLINIQTQSRVITYAGCIT. Cysteine 97 and cysteine 189 are disulfide-bonded. Residues 100–120 form a helical membrane-spanning segment; sequence QMCFFVLFGGLDSLLLAVMAY. At 121 to 139 the chain is on the cytoplasmic side; it reads DRFVAICHPLHYTVIMNPR. A helical transmembrane segment spans residues 140–160; it reads LCGLLVLASWMIAALNSLSQS. Residues 161 to 197 are Extracellular-facing; sequence LMVLWLSFCTDLEIPHFFCELNQVIHLACSDTFLNDM. The helical transmembrane segment at 198-217 threads the bilayer; that stretch reads GMYFAAGLLAGGPLVGILCS. The Cytoplasmic segment spans residues 218–237; the sequence is YSKIVSSIRAISSAQGKYKA. The helical transmembrane segment at 238–258 threads the bilayer; sequence FSTCASHLSVVSLFCCTGLGV. The Extracellular portion of the chain corresponds to 259-271; that stretch reads YLTSAATHNSHTS. The helical transmembrane segment at 272–292 threads the bilayer; it reads ATASVMYTVATPMLNPFIYSL. The Cytoplasmic portion of the chain corresponds to 293-309; it reads RNKDIKRALKMSFRGKQ.

It belongs to the G-protein coupled receptor 1 family.

The protein resides in the cell membrane. In terms of biological role, odorant receptor. The chain is Olfactory receptor 7A17 (OR7A17) from Homo sapiens (Human).